Reading from the N-terminus, the 30-residue chain is Cycloviolacin-O4 (30 aa).

Residues 1–30 (GIPCGESCVWIPCISSAIGCSCKNKVCYRN) constitute a cross-link (cyclopeptide (Gly-Asn)). 3 disulfide bridges follow: Cys4/Cys20, Cys8/Cys22, and Cys13/Cys27.

In terms of processing, this is a cyclic peptide. In terms of tissue distribution, expressed in petals, petioles, roots and runners but not in leaves (at protein level).

Probably participates in a plant defense mechanism. In Viola odorata (Sweet violet), this protein is Cycloviolacin-O4.